The sequence spans 346 residues: Ribosomal RNA small subunit methyltransferase H (346 aa).

S-adenosyl-L-methionine-binding positions include 47–49, aspartate 65, phenylalanine 92, aspartate 113, and glutamine 120; that span reads GGY. Basic and acidic residues predominate over residues 270–279; it reads RGEAPSRRLP. The tract at residues 270–346 is disordered; it reads RGEAPSRRLP…ALPQRAAKGR (77 aa).

The protein belongs to the methyltransferase superfamily. RsmH family.

Its subcellular location is the cytoplasm. It carries out the reaction cytidine(1402) in 16S rRNA + S-adenosyl-L-methionine = N(4)-methylcytidine(1402) in 16S rRNA + S-adenosyl-L-homocysteine + H(+). Its function is as follows. Specifically methylates the N4 position of cytidine in position 1402 (C1402) of 16S rRNA. This chain is Ribosomal RNA small subunit methyltransferase H, found in Methylocella silvestris (strain DSM 15510 / CIP 108128 / LMG 27833 / NCIMB 13906 / BL2).